We begin with the raw amino-acid sequence, 35 residues long: Fatty acid synthase (35 aa).

Residue Ser-12 is part of the active site.

In terms of assembly, homodimer which is arranged in a head to tail fashion. Interacts with CEACAM1; this interaction is insulin and phosphorylation-dependent; reduces fatty-acid synthase activity.

The protein localises to the cytoplasm. It localises to the melanosome. It catalyses the reaction acetyl-CoA + n malonyl-CoA + 2n NADPH + 2n H(+) = a long-chain fatty acid + (n+1) CoA + n CO2 + 2n NADP(+).. Functionally, fatty acid synthetase catalyzes the formation of long-chain fatty acids from acetyl-CoA, malonyl-CoA and NADPH. This multifunctional protein has 7 catalytic activities as an acyl carrier protein. Its function is as follows. This fragment is from the acyltransferase domain of the fatty acid synthetase. The polypeptide is Fatty acid synthase (FASN) (Capra hircus (Goat)).